The following is a 314-amino-acid chain: Fibrinogen-like protein 1 (314 aa).

Positions 1-22 (MGEIRSFVLITVALILGKESWV) are cleaved as a signal peptide. Residues 28 to 62 (CLQEQVRLRAQVRQLETRVKQQQVVIAQLLHEKEV) are a coiled coil. Residues 76–308 (LGGKRHYADC…SVVMKIRPSD (233 aa)) enclose the Fibrinogen C-terminal domain. 2 cysteine pairs are disulfide-bonded: Cys85/Cys114 and Cys250/Cys263.

In terms of assembly, homodimer. Interacts (via the Fibrinogen C-terminal domain) with LAG3 (via Ig-like domains 1 and 2).

The protein resides in the secreted. Its function is as follows. Immune suppressive molecule that inhibits antigen-specific T-cell activation by acting as a major ligand of LAG3. Responsible for LAG3 T-cell inhibitory function. Binds LAG3 independently from MHC class II (MHC-II). Secreted by, and promotes growth of, hepatocytes. The chain is Fibrinogen-like protein 1 from Rattus norvegicus (Rat).